The sequence spans 445 residues: Lipid A 1-phosphatase (445 aa).

Residues 1 to 22 (MNRESFLLLLVLLFALPLHLQA) form the signal peptide.

The protein localises to the periplasm. Its pathway is bacterial outer membrane biogenesis; LPS lipid A biosynthesis. Removes the 1-phosphate group from lipid A species. Absence of phosphate groups in lipid A renders the bacteria resistant to host-derived cationic antimicrobial peptides (CAMP) and allowing it to camouflage itself from the host innate immune response. The protein is Lipid A 1-phosphatase of Porphyromonas gingivalis (strain ATCC 33277 / DSM 20709 / CIP 103683 / JCM 12257 / NCTC 11834 / 2561).